The sequence spans 501 residues: Cytochrome P450 4d2 (501 aa).

The heme site is built by Glu311 and Cys449.

This sequence belongs to the cytochrome P450 family. Heme serves as cofactor.

It localises to the endoplasmic reticulum membrane. It is found in the microsome membrane. In terms of biological role, involved in the metabolism of insect hormones and in the breakdown of synthetic insecticides. The polypeptide is Cytochrome P450 4d2 (Cyp4d2) (Drosophila melanogaster (Fruit fly)).